The sequence spans 323 residues: Phosphatidylethanolamine:ceramide ethanolaminephosphotransferase (323 aa).

Residues 1–26 (MAVPPVEMYSGSFWNRMRKPLPLRTQ) lie on the Cytoplasmic side of the membrane. A helical transmembrane segment spans residues 27–47 (VIRFTVVFVIVSFILVVALQI). Residues 48–74 (THERMPDPKVTKPLPDLGFELLTKVPG) lie on the Extracellular side of the membrane. The helical transmembrane segment at 75–95 (MYVLADCCIGFLNILSVFTAF) threads the bilayer. Topologically, residues 96–147 (KLYLLHRHCVGSGEPELPCNIPGVSRFFLSVWLCKENCRIELRNIHTIAWIR) are cytoplasmic. The helical transmembrane segment at 148-168 (FITSYALLLLSRSIIMVVTSL) threads the bilayer. Topologically, residues 169-187 (PNPDDLCQNPPKIENRVKD) are extracellular. A helical transmembrane segment spans residues 188-208 (ILLTVLTAGAGSIHCGDLMYS). Topologically, residues 209–233 (GHTVILTLHLMFHWIYGAMVHWSFR) are cytoplasmic. A helical transmembrane segment spans residues 234–254 (PVVTVVAIFGYYCIVASRFHY). The Extracellular segment spans residues 255–257 (TDD). The helical transmembrane segment at 258–278 (VLVAIYLTIATFIAVGHNADG) threads the bilayer. Topologically, residues 279-323 (APWQLQLFIRWWPCCGANSREVAEDGVPVAIVIKNEEMMNFEGKS) are cytoplasmic.

This sequence belongs to the sphingomyelin synthase family.

The protein localises to the membrane. The enzyme catalyses an N-acylsphing-4-enine + a 1,2-diacyl-sn-glycero-3-phosphoethanolamine = an N-acylsphing-4-enine 1-phosphoethanolamine + a 1,2-diacyl-sn-glycerol. It carries out the reaction an N-acylsphinganine + a 1,2-diacyl-sn-glycero-3-phosphoethanolamine = an N-acylsphinganine-1-phosphoethanolamine + a 1,2-diacyl-sn-glycerol. Predominantly synthesizes ethanolamine-phosphorylceramide (EPC), with minimal sphingomyelin (SM)/inositol phosphorylceramide (IPC) synthase activity. Specificity is likely to be defined by residues in the lumenal catalytic domain that interact with the polar head groups of the phospholipid donors. EPC is synthesized by both stages of the parasite life cycle, bloodstream forms (BSF) and procyclic forms (PCF), by transferring the phosphoethanolamine from a 1,2-diacyl-sn-glycero-3-phosphoethanolamine to an N-acylsphing-4-enine (ceramide) or an N-acylsphinganine (dihydroceramide). Similarly, SM is synthesized by transferring the phosphocholine from a 1,2-diacyl-sn-glycero-3-phosphocholine to ceramide or dihydroceramide by BSF and PCF, while IPC is confined to PCF. The ceramide/dihydroceramide ratios are skewed towards dihydroceramide in PCF parasites and ceramide in BSF parasites, this is likely due to differential expression and/or regulation of dihydroceramide desaturase, the enzyme responsible for converting dihydroceramide to ceramide. The sequence is that of Phosphatidylethanolamine:ceramide ethanolaminephosphotransferase from Trypanosoma brucei brucei.